A 183-amino-acid chain; its full sequence is Translocon-associated protein subunit beta (183 aa).

The first 17 residues, 1–17 (MRLLAVVVLALLAVSQA), serve as a signal peptide directing secretion. Topologically, residues 18 to 146 (EEGARLLASK…REFDRRFSPH (129 aa)) are lumenal. N88 carries N-linked (GlcNAc...) (high mannose) asparagine glycosylation. N104 carries an N-linked (GlcNAc...) asparagine glycan. The chain crosses the membrane as a helical span at residues 147–167 (FLDWAAFGVMTLPSIGIPLLL). At 168–183 (WYSSKRKYDTPKPKKN) the chain is on the cytoplasmic side.

The protein belongs to the TRAP-beta family. Heterotetramer of TRAP-alpha, TRAP-beta, TRAP-delta and TRAP-gamma. Interacts with STING1.

Its subcellular location is the endoplasmic reticulum membrane. TRAP proteins are part of a complex whose function is to bind calcium to the ER membrane and thereby regulate the retention of ER resident proteins. This chain is Translocon-associated protein subunit beta (Ssr2), found in Mus musculus (Mouse).